The primary structure comprises 240 residues: ATP synthase subunit a (240 aa).

The next 5 helical transmembrane spans lie at 21–41 (LSNL…CVWG), 78–98 (IFLP…LIGV), 116–136 (DAVM…YYGI), 183–203 (ILLS…FGAA), and 212–232 (FSVF…MVYM).

Belongs to the ATPase A chain family. F-type ATPases have 2 components, CF(1) - the catalytic core - and CF(0) - the membrane proton channel. CF(1) has five subunits: alpha(3), beta(3), gamma(1), delta(1), epsilon(1). CF(0) has three main subunits: a(1), b(2) and c(9-12). The alpha and beta chains form an alternating ring which encloses part of the gamma chain. CF(1) is attached to CF(0) by a central stalk formed by the gamma and epsilon chains, while a peripheral stalk is formed by the delta and b chains.

The protein localises to the cell membrane. In terms of biological role, key component of the proton channel; it plays a direct role in the translocation of protons across the membrane. This Oceanobacillus iheyensis (strain DSM 14371 / CIP 107618 / JCM 11309 / KCTC 3954 / HTE831) protein is ATP synthase subunit a.